The sequence spans 245 residues: MKILISNDDGYLAPGLIALADALAPIADIVVVAPDSNRSGSSNSLTLDRPLSVYQASNGFYFINGTPSDCVHIALTGIMSFRPDLIVSGINQGQNMGDDTLYSGTVAAATEGHLFGIPAIAFSQLEKGWAELKSAARVARDIVERRFETLPENFLLNVNIPNLPYEQLKPAVATRLGRRHQSEAVIKAQDPHGRDIYWIGPSGGQKDAGEGTDFHATAQGHVSITPLQIDLTQNAQLAALKKVLA.

Positions 8, 9, 39, and 91 each coordinate a divalent metal cation.

Belongs to the SurE nucleotidase family. A divalent metal cation serves as cofactor.

The protein localises to the cytoplasm. It catalyses the reaction a ribonucleoside 5'-phosphate + H2O = a ribonucleoside + phosphate. Its function is as follows. Nucleotidase that shows phosphatase activity on nucleoside 5'-monophosphates. This chain is 5'-nucleotidase SurE, found in Herminiimonas arsenicoxydans.